The primary structure comprises 149 residues: Prefoldin subunit alpha (149 aa).

The protein belongs to the prefoldin subunit alpha family. Heterohexamer of two alpha and four beta subunits.

The protein resides in the cytoplasm. In terms of biological role, molecular chaperone capable of stabilizing a range of proteins. Seems to fulfill an ATP-independent, HSP70-like function in archaeal de novo protein folding. The chain is Prefoldin subunit alpha from Methanospirillum hungatei JF-1 (strain ATCC 27890 / DSM 864 / NBRC 100397 / JF-1).